We begin with the raw amino-acid sequence, 549 residues long: Cytoplasmic trehalase (549 aa).

Substrate is bound by residues arginine 168, 175 to 176 (WD), asparagine 212, 221 to 223 (RSQ), 292 to 294 (RDE), and glycine 324. Residues aspartate 326 and glutamate 509 each act as proton donor/acceptor in the active site. Residue glutamate 525 participates in substrate binding.

Belongs to the glycosyl hydrolase 37 family. As to quaternary structure, monomer.

It is found in the cytoplasm. It catalyses the reaction alpha,alpha-trehalose + H2O = alpha-D-glucose + beta-D-glucose. Its pathway is glycan degradation; trehalose degradation; D-glucose from alpha,alpha-trehalose: step 1/1. Functionally, hydrolyzes trehalose to glucose. Could be involved, in cells returning to low osmolarity conditions, in the utilization of the accumulated cytoplasmic trehalose, which was synthesized in response to high osmolarity. This Salmonella schwarzengrund (strain CVM19633) protein is Cytoplasmic trehalase.